We begin with the raw amino-acid sequence, 504 residues long: ATP synthase subunit alpha (504 aa).

169–176 (GDRQTGKT) is a binding site for ATP.

It belongs to the ATPase alpha/beta chains family. As to quaternary structure, F-type ATPases have 2 components, CF(1) - the catalytic core - and CF(0) - the membrane proton channel. CF(1) has five subunits: alpha(3), beta(3), gamma(1), delta(1), epsilon(1). CF(0) has three main subunits: a(1), b(2) and c(9-12). The alpha and beta chains form an alternating ring which encloses part of the gamma chain. CF(1) is attached to CF(0) by a central stalk formed by the gamma and epsilon chains, while a peripheral stalk is formed by the delta and b chains.

It is found in the cell membrane. It catalyses the reaction ATP + H2O + 4 H(+)(in) = ADP + phosphate + 5 H(+)(out). Produces ATP from ADP in the presence of a proton gradient across the membrane. The alpha chain is a regulatory subunit. The chain is ATP synthase subunit alpha from Clostridium kluyveri (strain NBRC 12016).